A 551-amino-acid polypeptide reads, in one-letter code: MRATAILRDLLASALENQGIAWPVKTTIEPPRDKAHGDLATNVAMMASKAAKKPPRELAESLRQALAADPRLASVEVAGPGFLNVAFTPAFWQETVCDVAKAGDGYGLLDIGQGVKIQVEFVSANPTGPLHIGHGRGAAVGDSLARVLRAAGFTVETEYYINDAGRQMRILGMSILYRYKELIGEPVTEPEDYYRGEYVIPLAQDMIDAHGRKLLEMPEAEATDICRLHGEREILAGIKKDLEDFRVHHDVWFPESTLLAAGAVDAAFNELRDKKLAYDQDGAFWFASTAFGDDKDRVLVKSGGELTYFASDIAYHADKFRRGFDVVVDIWGADHHGYVPRMKACVSALGRDPEASLKVILVQLVNLLKGGEQIAMSTRAGKFETLADVVKEVGADSARFMFLSRKSDSHLDFDLDAVKEKSMDNPVYYVQYAHARVRSLFAKAQERGQAVAETSPELLALLTTDEDLELLKLLEQYPDTVAAAARTFSPHLVSFYLRDLAGRLHRYYTVNPVLTAGSDDLASARLRLLDAVAQTIKNGLDLLGVSAPDKM.

Residues 124 to 134 (ANPTGPLHIGH) carry the 'HIGH' region motif.

The protein belongs to the class-I aminoacyl-tRNA synthetase family. As to quaternary structure, monomer.

The protein resides in the cytoplasm. It carries out the reaction tRNA(Arg) + L-arginine + ATP = L-arginyl-tRNA(Arg) + AMP + diphosphate. The protein is Arginine--tRNA ligase of Solidesulfovibrio magneticus (strain ATCC 700980 / DSM 13731 / RS-1) (Desulfovibrio magneticus).